We begin with the raw amino-acid sequence, 93 residues long: uncharacterized protein (93 aa).

Residues 26–73 are disordered; sequence NRGTIFRPMTRNSGIVGRRGGPVAPAPFRNNVQKPGTRPPGFKPPSGV.

This is an uncharacterized protein from Caenorhabditis elegans.